The following is a 453-amino-acid chain: Aldehyde dehydrogenase, dimeric NADP-preferring (453 aa).

Serine 2 carries the post-translational modification N-acetylserine. Lysine 178 bears the N6-acetyllysine mark. 188 to 193 (GSTAVG) serves as a coordination point for NAD(+). Lysine 194 is subject to N6-acetyllysine. Active-site residues include glutamate 210 and cysteine 244.

Belongs to the aldehyde dehydrogenase family. In terms of assembly, homodimer.

The protein resides in the cytoplasm. The enzyme catalyses an aldehyde + NAD(+) + H2O = a carboxylate + NADH + 2 H(+). It catalyses the reaction octanal + NAD(+) + H2O = octanoate + NADH + 2 H(+). In terms of biological role, ALDHs play a major role in the detoxification of alcohol-derived acetaldehyde. They are involved in the metabolism of corticosteroids, biogenic amines, neurotransmitters, and lipid peroxidation. Oxidizes medium and long chain aldehydes into non-toxic fatty acids. Preferentially oxidizes aromatic aldehyde substrates. Comprises about 50 percent of corneal epithelial soluble proteins. May play a role in preventing corneal damage caused by ultraviolet light. The protein is Aldehyde dehydrogenase, dimeric NADP-preferring (Aldh3a1) of Rattus norvegicus (Rat).